A 193-amino-acid chain; its full sequence is ATP synthase subunit b 2 (193 aa).

Residues 44–64 (IFWLVLTLLAIYFVLTKIALP) traverse the membrane as a helical segment.

The protein belongs to the ATPase B chain family. F-type ATPases have 2 components, F(1) - the catalytic core - and F(0) - the membrane proton channel. F(1) has five subunits: alpha(3), beta(3), gamma(1), delta(1), epsilon(1). F(0) has three main subunits: a(1), b(2) and c(10-14). The alpha and beta chains form an alternating ring which encloses part of the gamma chain. F(1) is attached to F(0) by a central stalk formed by the gamma and epsilon chains, while a peripheral stalk is formed by the delta and b chains.

Its subcellular location is the cell inner membrane. F(1)F(0) ATP synthase produces ATP from ADP in the presence of a proton or sodium gradient. F-type ATPases consist of two structural domains, F(1) containing the extramembraneous catalytic core and F(0) containing the membrane proton channel, linked together by a central stalk and a peripheral stalk. During catalysis, ATP synthesis in the catalytic domain of F(1) is coupled via a rotary mechanism of the central stalk subunits to proton translocation. In terms of biological role, component of the F(0) channel, it forms part of the peripheral stalk, linking F(1) to F(0). The b'-subunit is a diverged and duplicated form of b found in plants and photosynthetic bacteria. The protein is ATP synthase subunit b 2 (atpF2) of Jannaschia sp. (strain CCS1).